A 460-amino-acid polypeptide reads, in one-letter code: Lipase member I (460 aa).

Residues 1 to 15 form the signal peptide; it reads MRVYIFLCLMCWVRS. A glycan (N-linked (GlcNAc...) asparagine) is linked at asparagine 63. Residue serine 159 is the Nucleophile of the active site. The Charge relay system role is filled by aspartate 183. An intrachain disulfide couples cysteine 238 to cysteine 251. The Charge relay system role is filled by histidine 253. 2 disulfide bridges follow: cysteine 275–cysteine 286 and cysteine 289–cysteine 297. Asparagine 396 carries an N-linked (GlcNAc...) asparagine glycan. Cysteine 436 and cysteine 455 are disulfide-bonded.

It belongs to the AB hydrolase superfamily. Lipase family. Interacts with heparin with a high affinity. In terms of tissue distribution, expressed in testis. Expressed exclusively at the connecting piece of the sperm.

The protein resides in the cell membrane. The protein localises to the secreted. The catalysed reaction is 1-hexadecanoyl-2-(9Z-octadecenoyl)-sn-glycero-3-phosphate + H2O = 2-(9Z-octadecenoyl)-sn-glycero-3-phosphate + hexadecanoate + H(+). Inhibited by sodium vanadate. In terms of biological role, hydrolyzes specifically phosphatidic acid (PA) to produce 2-acyl lysophosphatidic acid (LPA; a potent bioactive lipid mediator) and fatty acid. Does not hydrolyze other phospholipids, like phosphatidylserine (PS), phosphatidylcholine (PC) and phosphatidylethanolamine (PE) or triacylglycerol (TG). The protein is Lipase member I (LIPI) of Homo sapiens (Human).